Reading from the N-terminus, the 248-residue chain is 23S rRNA (guanosine(2553)-2'-O)-methyltransferase RlmP (248 aa).

Arginine 123, glycine 204, valine 224, and leucine 233 together coordinate S-adenosyl-L-methionine.

The protein belongs to the class IV-like SAM-binding methyltransferase superfamily. RNA methyltransferase TrmH family. In terms of assembly, homodimer.

It is found in the cytoplasm. The catalysed reaction is guanosine(2553) in 23S rRNA + S-adenosyl-L-methionine = 2'-O-methylguanosine(2553) in 23S rRNA + S-adenosyl-L-homocysteine + H(+). Its function is as follows. Specifically methylates the ribose of guanosine 2553 (G2553) in 23S rRNA. When the target G2553 is mutated, is able to methylate the ribose of adenosine, but it cannot methylate cytidine nor uridine. Modifies free 23S rRNA but not the fully assembled ribosome nor the 50S subunit, suggesting that the modification occurs early during ribosome biogenesis. The sequence is that of 23S rRNA (guanosine(2553)-2'-O)-methyltransferase RlmP from Bacillus subtilis (strain 168).